Reading from the N-terminus, the 302-residue chain is Sulfate adenylyltransferase subunit 2 (302 aa).

This sequence belongs to the PAPS reductase family. CysD subfamily. As to quaternary structure, heterodimer composed of CysD, the smaller subunit, and CysN.

The catalysed reaction is sulfate + ATP + H(+) = adenosine 5'-phosphosulfate + diphosphate. It participates in sulfur metabolism; hydrogen sulfide biosynthesis; sulfite from sulfate: step 1/3. Functionally, with CysN forms the ATP sulfurylase (ATPS) that catalyzes the adenylation of sulfate producing adenosine 5'-phosphosulfate (APS) and diphosphate, the first enzymatic step in sulfur assimilation pathway. APS synthesis involves the formation of a high-energy phosphoric-sulfuric acid anhydride bond driven by GTP hydrolysis by CysN coupled to ATP hydrolysis by CysD. The chain is Sulfate adenylyltransferase subunit 2 from Shewanella halifaxensis (strain HAW-EB4).